Reading from the N-terminus, the 312-residue chain is Ribosomal protein L11 methyltransferase (312 aa).

Threonine 163, glycine 184, aspartate 206, and asparagine 248 together coordinate S-adenosyl-L-methionine.

Belongs to the methyltransferase superfamily. PrmA family.

The protein resides in the cytoplasm. The enzyme catalyses L-lysyl-[protein] + 3 S-adenosyl-L-methionine = N(6),N(6),N(6)-trimethyl-L-lysyl-[protein] + 3 S-adenosyl-L-homocysteine + 3 H(+). Its function is as follows. Methylates ribosomal protein L11. This is Ribosomal protein L11 methyltransferase from Clostridium botulinum (strain Hall / ATCC 3502 / NCTC 13319 / Type A).